Reading from the N-terminus, the 404-residue chain is WD repeat and SOCS box-containing protein 2 (404 aa).

WD repeat units follow at residues 16–55 (GRPHQFDWKSSCETWSVAFSPDGSWFAWSQGHCIVKLIPW), 81–140 (GSPK…IWEV), 144–183 (LLLLNLSGHQDVVRDLSFTPSGSLILVSASRDKTLRIWDL), 188–226 (KQIQVLSGHLQWVYCCSISPDCSMLCSAAGEKSVFLWSM), 230–268 (TLIRKLEGHQSSVVSCDFSPDSALLVTASYDTNVIMWDP), 283–322 (DPAMDDSDVHISSLRSVCFSPEGLYLATVADDRLLRIWAL), and 325–362 (KTPIAFAPMTNGLCCTFFPHGGVIATGTRDGHVQFWTA). The tract at residues 68-87 (AKSRSSKNETKGRGSPKEKT) is disordered. The SOCS box domain maps to 356 to 404 (HVQFWTAPRVLSSLKHLCRKALRSFLTTYQVLALPIPKKMKEFLTYRTF).

The protein operates within protein modification; protein ubiquitination. May be a substrate-recognition component of a SCF-like ECS (Elongin-Cullin-SOCS-box protein) E3 ubiquitin ligase complex which mediates the ubiquitination and subsequent proteasomal degradation of target proteins. This Homo sapiens (Human) protein is WD repeat and SOCS box-containing protein 2 (WSB2).